We begin with the raw amino-acid sequence, 170 residues long: Interferon gamma (170 aa).

The first 20 residues, 1-20 (MNSRLCIMALLLCFSQALLG), serve as a signal peptide directing secretion. Asparagine 36 and asparagine 103 each carry an N-linked (GlcNAc...) asparagine glycan.

This sequence belongs to the type II (or gamma) interferon family. As to quaternary structure, homodimer. Interacts with IFNGR1 (via extracellular domain); this interaction promotes IFNGR1 dimerization. As to expression, released primarily from activated T lymphocytes.

The protein resides in the secreted. Functionally, type II interferon produced by immune cells such as T-cells and NK cells that plays crucial roles in antimicrobial, antiviral, and antitumor responses by activating effector immune cells and enhancing antigen presentation. Primarily signals through the JAK-STAT pathway after interaction with its receptor IFNGR1 to affect gene regulation. Upon IFNG binding, IFNGR1 intracellular domain opens out to allow association of downstream signaling components JAK2, JAK1 and STAT1, leading to STAT1 activation, nuclear translocation and transcription of IFNG-regulated genes. Many of the induced genes are transcription factors such as IRF1 that are able to further drive regulation of a next wave of transcription. Plays a role in class I antigen presentation pathway by inducing a replacement of catalytic proteasome subunits with immunoproteasome subunits. In turn, increases the quantity, quality, and repertoire of peptides for class I MHC loading. Increases the efficiency of peptide generation also by inducing the expression of activator PA28 that associates with the proteasome and alters its proteolytic cleavage preference. Up-regulates as well MHC II complexes on the cell surface by promoting expression of several key molecules such as cathepsins B/CTSB, H/CTSH, and L/CTSL. Participates in the regulation of hematopoietic stem cells during development and under homeostatic conditions by affecting their development, quiescence, and differentiation. In Sigmodon hispidus (Hispid cotton rat), this protein is Interferon gamma (IFNG).